The primary structure comprises 454 residues: tRNA modification GTPase MnmE (454 aa).

Residues arginine 23, glutamate 80, and lysine 120 each contribute to the (6S)-5-formyl-5,6,7,8-tetrahydrofolate site. In terms of domain architecture, TrmE-type G spans glycine 216–glycine 377. Position 226 (asparagine 226) interacts with K(+). GTP contacts are provided by residues asparagine 226–serine 231, threonine 245–threonine 251, aspartate 270–glycine 273, asparagine 335–aspartate 338, and serine 358–arginine 360. Serine 230 is a binding site for Mg(2+). Residues threonine 245, isoleucine 247, and threonine 250 each contribute to the K(+) site. Threonine 251 is a Mg(2+) binding site. Residue lysine 454 coordinates (6S)-5-formyl-5,6,7,8-tetrahydrofolate.

Belongs to the TRAFAC class TrmE-Era-EngA-EngB-Septin-like GTPase superfamily. TrmE GTPase family. Homodimer. Heterotetramer of two MnmE and two MnmG subunits. K(+) is required as a cofactor.

It localises to the cytoplasm. In terms of biological role, exhibits a very high intrinsic GTPase hydrolysis rate. Involved in the addition of a carboxymethylaminomethyl (cmnm) group at the wobble position (U34) of certain tRNAs, forming tRNA-cmnm(5)s(2)U34. The sequence is that of tRNA modification GTPase MnmE from Yersinia pseudotuberculosis serotype IB (strain PB1/+).